A 285-amino-acid polypeptide reads, in one-letter code: Urease accessory protein UreD (285 aa).

This sequence belongs to the UreD family. As to quaternary structure, ureD, UreF and UreG form a complex that acts as a GTP-hydrolysis-dependent molecular chaperone, activating the urease apoprotein by helping to assemble the nickel containing metallocenter of UreC. The UreE protein probably delivers the nickel.

Its subcellular location is the cytoplasm. Required for maturation of urease via the functional incorporation of the urease nickel metallocenter. This is Urease accessory protein UreD from Methylobacillus flagellatus (strain ATCC 51484 / DSM 6875 / VKM B-1610 / KT).